A 94-amino-acid chain; its full sequence is Integration host factor subunit beta (94 aa).

Belongs to the bacterial histone-like protein family. As to quaternary structure, heterodimer of an alpha and a beta chain.

Functionally, this protein is one of the two subunits of integration host factor, a specific DNA-binding protein that functions in genetic recombination as well as in transcriptional and translational control. The sequence is that of Integration host factor subunit beta from Escherichia coli (strain UTI89 / UPEC).